Reading from the N-terminus, the 314-residue chain is GMP synthase [glutamine-hydrolyzing] subunit B (314 aa).

One can recognise a GMPS ATP-PPase domain in the interval 2–186 (FDPKKFVEEA…LGIPDEIVER (185 aa)). 29–35 (SGGVDST) provides a ligand contact to ATP.

In terms of assembly, heterodimer composed of a glutamine amidotransferase subunit (A) and a GMP-binding subunit (B).

The enzyme catalyses XMP + L-glutamine + ATP + H2O = GMP + L-glutamate + AMP + diphosphate + 2 H(+). It participates in purine metabolism; GMP biosynthesis; GMP from XMP (L-Gln route): step 1/1. Catalyzes the synthesis of GMP from XMP. This Methanopyrus kandleri (strain AV19 / DSM 6324 / JCM 9639 / NBRC 100938) protein is GMP synthase [glutamine-hydrolyzing] subunit B (guaAB).